Consider the following 571-residue polypeptide: Proline--tRNA ligase (571 aa).

Belongs to the class-II aminoacyl-tRNA synthetase family. ProS type 1 subfamily. As to quaternary structure, homodimer.

The protein resides in the cytoplasm. The enzyme catalyses tRNA(Pro) + L-proline + ATP = L-prolyl-tRNA(Pro) + AMP + diphosphate. In terms of biological role, catalyzes the attachment of proline to tRNA(Pro) in a two-step reaction: proline is first activated by ATP to form Pro-AMP and then transferred to the acceptor end of tRNA(Pro). As ProRS can inadvertently accommodate and process non-cognate amino acids such as alanine and cysteine, to avoid such errors it has two additional distinct editing activities against alanine. One activity is designated as 'pretransfer' editing and involves the tRNA(Pro)-independent hydrolysis of activated Ala-AMP. The other activity is designated 'posttransfer' editing and involves deacylation of mischarged Ala-tRNA(Pro). The misacylated Cys-tRNA(Pro) is not edited by ProRS. This chain is Proline--tRNA ligase, found in Actinobacillus pleuropneumoniae serotype 7 (strain AP76).